The primary structure comprises 508 residues: Amphoterin-induced protein 3 (508 aa).

Residues 1-19 form the signal peptide; sequence MAWLVLLGLLLCMLGAGSG. Over 20 to 383 the chain is Extracellular; that stretch reads TSDLEGVLPP…PRPEPEAFNT (364 aa). The LRRNT domain occupies 25–61; the sequence is GVLPPDPHNCPNKCVCAADVLSCAGRGLQDLPAALPA. Intrachain disulfides connect Cys34-Cys40 and Cys38-Cys47. LRR repeat units follow at residues 62–83, 86–107, 110–131, 134–155, 158–178, and 184–207; these read TAAE…WLAP, RLRA…VFTN, GLRI…DLDG, ELEK…AFQG, MLSH…NHLH, and RLRT…AALP. The N-linked (GlcNAc...) asparagine glycan is linked to Asn107. The 57-residue stretch at 219–275 folds into the LRRCT domain; the sequence is NPLPCDCSLYHLLRRWHQRGLSALHDFEREYTCLAFKVAESRVRFFEHSRVFKNCSV. 3 cysteine pairs are disulfide-bonded: Cys223–Cys251, Cys225–Cys273, and Cys300–Cys352. Residues Asn272, Asn301, Asn362, and Asn368 are each glycosylated (N-linked (GlcNAc...) asparagine). One can recognise an Ig-like C2-type domain in the interval 279-370; that stretch reads PGLELPEEEL…HNQTLEYNVS (92 aa). Residues 384 to 404 traverse the membrane as a helical segment; sequence GFTTLLGCIVGLVLVLLYLFA. Residues 405–508 are Cytoplasmic-facing; sequence PPCRGCCRCC…STGSEGLMMS (104 aa).

This sequence belongs to the immunoglobulin superfamily. AMIGO family. As to quaternary structure, binds AMIGO1 or AMIGO2.

It localises to the membrane. Its function is as follows. May mediate heterophilic cell-cell interaction. May contribute to signal transduction through its intracellular domain. The protein is Amphoterin-induced protein 3 of Rattus norvegicus (Rat).